The chain runs to 109 residues: Nucleoid-associated protein Shal_1591 (109 aa).

Residues 87-109 (NQKEKMAEVTGGMQLPPGMKMPF) form a disordered region.

The protein belongs to the YbaB/EbfC family. As to quaternary structure, homodimer.

Its subcellular location is the cytoplasm. It localises to the nucleoid. In terms of biological role, binds to DNA and alters its conformation. May be involved in regulation of gene expression, nucleoid organization and DNA protection. The polypeptide is Nucleoid-associated protein Shal_1591 (Shewanella halifaxensis (strain HAW-EB4)).